The chain runs to 446 residues: Citrate/sodium symporter (446 aa).

A run of 5 helical transmembrane segments spans residues 23 to 43, 46 to 66, 79 to 99, 110 to 130, and 148 to 168; these read IFGMPLPLYAFALITLLLSHF, AIPTDLVGGFALMFVMGAIFG, IGGAPVMIFLVAAYFVYAGIF, VMDKSNFLNLFIAVLITGAIL, and ILAGIVGASLFGIVIGLCFGI. 2 residues coordinate Na(+): Ile-181 and Gly-183. Citrate is bound by residues Asn-186 and Gly-187. 5 helical membrane-spanning segments follow: residues 213-233, 267-287, 289-309, 335-355, and 364-384; these read IAILTIANIFAIIFAALLDMI, ETAVGMVLSTTCFLLAYVVAK, ILPSIGGVSIHYFAWMVLIVA, QLLWVLMVGVGVCYTDLQEII, and VIAAIIVVGAVVGAAIGGWLI. 2 residues coordinate Na(+): Met-399 and Asn-401. 4 residues coordinate citrate: Arg-402, Gly-404, Ser-405, and Arg-428. A helical membrane pass occupies residues 425 to 445; sequence ISSRLGGGIVLVIASIVFSMM.

This sequence belongs to the 2-hydroxycarboxylate transporter (2-HCT) (TC 2.A.24) family. As to quaternary structure, homodimer.

It is found in the cell inner membrane. The enzyme catalyses citrate(out) + 2 Na(+)(out) = citrate(in) + 2 Na(+)(in). Functionally, secondary active transporter that catalyzes the uptake of citrate across the membrane with the concomitant uptake of sodium. Is specific for citrate. This chain is Citrate/sodium symporter, found in Salmonella dublin.